Here is a 232-residue protein sequence, read N- to C-terminus: Orotidine 5'-phosphate decarboxylase (232 aa).

Substrate is bound by residues Asp-13, Lys-35, 62–71, Thr-121, Arg-182, Gln-191, Gly-211, and Arg-212; that span reads DLKFHDIPNT. Lys-64 functions as the Proton donor in the catalytic mechanism.

The protein belongs to the OMP decarboxylase family. Type 1 subfamily. In terms of assembly, homodimer.

It carries out the reaction orotidine 5'-phosphate + H(+) = UMP + CO2. It functions in the pathway pyrimidine metabolism; UMP biosynthesis via de novo pathway; UMP from orotate: step 2/2. Catalyzes the decarboxylation of orotidine 5'-monophosphate (OMP) to uridine 5'-monophosphate (UMP). This Acinetobacter baumannii (strain ACICU) protein is Orotidine 5'-phosphate decarboxylase.